The primary structure comprises 265 residues: MPRLKLTLEYEGTRYVGWQVQPNGPSIQSVLESGLERLLGARVSVASAGRTDAGVHASGQVACFDSPRVLPMKAYVMGLNGLLPPDVAVVDAVEVAEDFDPRRWSRGKRYRYRVSNRRTRSPLRRMTHWEVFAPLDVEAMRQAAAHLLGRHDFSAFRAADCQAKHAVREIRSLAVEGTSGDAVSFVVEGTAFLKHMVRNLAGTLVEVGKGRRPASWVAEVLASQERKRAGPTAPPQGLVLEEVFYRDGPPARTPGGTTDAEEDEG.

The Nucleophile role is filled by Asp52. Tyr110 contacts substrate. Residues 244-265 (FYRDGPPARTPGGTTDAEEDEG) are disordered.

The protein belongs to the tRNA pseudouridine synthase TruA family. Homodimer.

The enzyme catalyses uridine(38/39/40) in tRNA = pseudouridine(38/39/40) in tRNA. In terms of biological role, formation of pseudouridine at positions 38, 39 and 40 in the anticodon stem and loop of transfer RNAs. The sequence is that of tRNA pseudouridine synthase A from Myxococcus xanthus.